A 166-amino-acid polypeptide reads, in one-letter code: Endoribonuclease YbeY (166 aa).

Zn(2+)-binding residues include His132, His136, and His142.

It belongs to the endoribonuclease YbeY family. Requires Zn(2+) as cofactor.

The protein resides in the cytoplasm. In terms of biological role, single strand-specific metallo-endoribonuclease involved in late-stage 70S ribosome quality control and in maturation of the 3' terminus of the 16S rRNA. The polypeptide is Endoribonuclease YbeY (Clostridium botulinum (strain Alaska E43 / Type E3)).